Here is a 79-residue protein sequence, read N- to C-terminus: Major outer membrane lipoprotein Lpp 2 (79 aa).

The signal sequence occupies residues 1–21 (MNRTNQLILGAVVLGSTLLAG). Residue C22 is the site of N-palmitoyl cysteine attachment. The S-diacylglycerol cysteine moiety is linked to residue C22. 2 repeats span residues 25–35 (NAKIDQLSSDV) and 39–49 (SAKVEQLSNDV). Residues 28–69 (IDQLSSDVQTLSAKVEQLSNDVNAMRSDVQAAKDDAARANQR) are a coiled coil. K79 is modified (N6-murein peptidoglycan lysine).

It belongs to the Lpp family. As to quaternary structure, homotrimer.

It is found in the cell outer membrane. Its subcellular location is the secreted. It localises to the cell wall. Plays an important role in virulence. A highly abundant outer membrane lipoprotein that controls the distance between the inner and outer membranes. The only protein known to be covalently linked to the peptidoglycan network (PGN). Also non-covalently binds the PGN. The link between the cell outer membrane and PGN contributes to maintenance of the structural and functional integrity of the cell envelope, and maintains the correct distance between the PGN and the outer membrane. The polypeptide is Major outer membrane lipoprotein Lpp 2 (Salmonella typhimurium (strain LT2 / SGSC1412 / ATCC 700720)).